The following is a 1180-amino-acid chain: Lon protease homolog 2, peroxisomal (1180 aa).

The Lon N-terminal domain occupies 19-366 (LPTCKLDSNL…ELINMINQLI (348 aa)). The interval 416-465 (PISNRGNIKSFNNSENGNNNKTNGSGITSRRPKSNEDGGEVYDEEDDDEE) is disordered. Over residues 422 to 444 (NIKSFNNSENGNNNKTNGSGITS) the composition is skewed to low complexity. Over residues 452–465 (DGGEVYDEEDDDEE) the composition is skewed to acidic residues. 667–674 (GPPGTGKT) contacts ATP. The 240-residue stretch at 924 to 1163 (NSRVGIVNGL…YDVMKILWGE (240 aa)) folds into the Lon proteolytic domain. Active-site residues include Ser-1032 and Lys-1075.

This sequence belongs to the peptidase S16 family.

The protein localises to the peroxisome matrix. It catalyses the reaction Hydrolysis of proteins in presence of ATP.. Its function is as follows. ATP-dependent serine protease that mediates the selective degradation of misfolded and unassembled polypeptides in the peroxisomal matrix. Necessary for type 2 peroxisome targeting signal (PTS2)-containing protein processing and facilitates peroxisome matrix protein import. This Scheffersomyces stipitis (strain ATCC 58785 / CBS 6054 / NBRC 10063 / NRRL Y-11545) (Yeast) protein is Lon protease homolog 2, peroxisomal.